The primary structure comprises 254 residues: Alcohol dehydrogenase (254 aa).

10 to 33 (FVAGLGGIGLDTSREIVKSGPKNL) provides a ligand contact to NAD(+). A substrate-binding site is contributed by Ser138. The Proton acceptor role is filled by Tyr151.

This sequence belongs to the short-chain dehydrogenases/reductases (SDR) family. Homodimer.

The enzyme catalyses a primary alcohol + NAD(+) = an aldehyde + NADH + H(+). It carries out the reaction a secondary alcohol + NAD(+) = a ketone + NADH + H(+). This is Alcohol dehydrogenase (Adh) from Drosophila mimica (Fruit fly).